The chain runs to 216 residues: Cytidylate kinase (216 aa).

10–18 contacts ATP; it reads GPAGAGKST.

This sequence belongs to the cytidylate kinase family. Type 1 subfamily.

The protein localises to the cytoplasm. It catalyses the reaction CMP + ATP = CDP + ADP. The enzyme catalyses dCMP + ATP = dCDP + ADP. This is Cytidylate kinase from Clostridioides difficile (strain 630) (Peptoclostridium difficile).